Consider the following 127-residue polypeptide: Evasin P467 (127 aa).

Residues 1–21 (MALKACITVIAVVYVVQVVRG) form the signal peptide. 4 disulfide bridges follow: C42/C63, C59/C100, C76/C105, and C95/C114. N-linked (GlcNAc...) asparagine glycans are attached at residues N49 and N94.

The protein resides in the secreted. Its function is as follows. Salivary chemokine-binding protein which binds to host chemokines CCL1, CCL2, CCL3 and CCL5. The chain is Evasin P467 from Rhipicephalus pulchellus (Yellow backed tick).